Reading from the N-terminus, the 94-residue chain is DNA-directed RNA polymerase subunit omega (94 aa).

It belongs to the RNA polymerase subunit omega family. Consists of a sigma factor and the RNAP core enzyme which is composed of 2 alpha chains, 1 beta chain, 1 beta' chain and 1 subunit omega.

It carries out the reaction RNA(n) + a ribonucleoside 5'-triphosphate = RNA(n+1) + diphosphate. Functionally, promotes RNA polymerase assembly. Latches the N- and C-terminal regions of the beta' subunit thereby facilitating its interaction with the beta and alpha subunits. The protein is DNA-directed RNA polymerase subunit omega of Shewanella violacea (strain JCM 10179 / CIP 106290 / LMG 19151 / DSS12).